A 179-amino-acid chain; its full sequence is Peptidyl-tRNA hydrolase (179 aa).

Tyr14 lines the tRNA pocket. Catalysis depends on His19, which acts as the Proton acceptor. Residues Tyr61, Asn63, and Asn107 each contribute to the tRNA site.

Belongs to the PTH family. Monomer.

The protein resides in the cytoplasm. The enzyme catalyses an N-acyl-L-alpha-aminoacyl-tRNA + H2O = an N-acyl-L-amino acid + a tRNA + H(+). Hydrolyzes ribosome-free peptidyl-tRNAs (with 1 or more amino acids incorporated), which drop off the ribosome during protein synthesis, or as a result of ribosome stalling. In terms of biological role, catalyzes the release of premature peptidyl moieties from peptidyl-tRNA molecules trapped in stalled 50S ribosomal subunits, and thus maintains levels of free tRNAs and 50S ribosomes. The protein is Peptidyl-tRNA hydrolase of Campylobacter lari (strain RM2100 / D67 / ATCC BAA-1060).